The chain runs to 296 residues: Sperm-activating peptides (296 aa).

3 propeptides span residues 1–134 (MPPG…MYKK), 146–190 (MLSN…MILK), and 290–296 (EVEIKDW).

In terms of biological role, causes stimulation of sperm respiration and motility through intracellular alkalinization, transient elevations of cAMP, cGMP and calcium levels in sperm cells, and transient activation and subsequent inactivation of the membrane form of guanylate cyclase. The protein is Sperm-activating peptides of Strongylocentrotus purpuratus (Purple sea urchin).